The sequence spans 346 residues: Putative alpha/beta hydrolase R526 (346 aa).

This sequence belongs to the AB hydrolase 3 family.

The protein localises to the virion. This Acanthamoeba polyphaga mimivirus (APMV) protein is Putative alpha/beta hydrolase R526.